Consider the following 337-residue polypeptide: Cysteinyl leukotriene receptor 1 (337 aa).

The Extracellular segment spans residues 1–28; that stretch reads MDETGNLTVSSATCHDTIDDFRNQVYST. Residue asparagine 6 is glycosylated (N-linked (GlcNAc...) asparagine). The chain crosses the membrane as a helical span at residues 29 to 49; the sequence is LYSMISVVGFFGNGFVLYVLI. At 50 to 57 the chain is on the cytoplasmic side; it reads KTYHKKSA. A helical transmembrane segment spans residues 58-78; sequence FQVYMINLAVADLLCVCTLPL. Topologically, residues 79 to 106 are extracellular; the sequence is RVVYYVHKGIWLFGDFLCRLSTYALYVN. Cysteine 96 and cysteine 173 are joined by a disulfide. A helical membrane pass occupies residues 107 to 127; that stretch reads LYCSIFFMTAMSFFRCIAIVF. Residues 128-141 lie on the Cytoplasmic side of the membrane; sequence PVQNINLVTQKKAR. A helical membrane pass occupies residues 142-162; that stretch reads FVCVGIWIFVILTSSPFLMAK. Topologically, residues 163–193 are extracellular; it reads PQKDEKNNTKCFEPPQDNQTKNHVLVLHYVS. N-linked (GlcNAc...) asparagine glycosylation is found at asparagine 169 and asparagine 180. The chain crosses the membrane as a helical span at residues 194-214; the sequence is LFVGFIIPFVIIIVCYTMIIL. Over 215-230 the chain is Cytoplasmic; the sequence is TLLKKSMKKNLSSHKK. A helical membrane pass occupies residues 231 to 251; that stretch reads AIGMIMVVTAAFLVSFMPYHI. Residues 252–276 lie on the Extracellular side of the membrane; sequence QRTIHLHFLHNETKPCDSVLRMQKS. Asparagine 262 carries an N-linked (GlcNAc...) asparagine glycan. Residues 277–297 form a helical membrane-spanning segment; sequence VVITLSLAASNCCFDPLLYFF. Over 298–337 the chain is Cytoplasmic; that stretch reads SGGNFRKRLSTFRKHSLSSVTYVPRKKASLPEKGEEICKV.

The protein belongs to the G-protein coupled receptor 1 family. In terms of tissue distribution, widely expressed, with highest levels in spleen and peripheral blood leukocytes. Lower expression in several tissues, such as lung (mostly in smooth muscle bundles and alveolar macrophages), placenta, small intestine, pancreas, colon and heart.

The protein localises to the cell membrane. Its function is as follows. Receptor for cysteinyl leukotrienes mediating bronchoconstriction of individuals with and without asthma. Stimulation by LTD4 results in the contraction and proliferation of smooth muscle, edema, eosinophil migration and damage to the mucus layer in the lung. This response is mediated via a G-protein that activates a phosphatidylinositol-calcium second messenger system. The rank order of affinities for the leukotrienes is LTD4 &gt;&gt; LTE4 = LTC4 &gt;&gt; LTB4. The chain is Cysteinyl leukotriene receptor 1 (CYSLTR1) from Homo sapiens (Human).